The sequence spans 622 residues: Cell pattern formation-associated protein stuA (622 aa).

Disordered stretches follow at residues 1–24 and 62–81; these read MASM…QTYA and YPNS…SISS. Residues 129 to 235 enclose the HTH APSES-type domain; the sequence is RVTATLWEDE…QHISNLLYHP (107 aa). Positions 163–184 form a DNA-binding region, H-T-H motif; the sequence is GTKLLNVAGMTRGRRDGILKSE. 2 disordered regions span residues 239–517 and 549–622; these read NQRN…TPPR and SNSG…SARR. Composition is skewed to polar residues over residues 274-283, 302-345, and 355-370; these read LQTPVPSHMS, ASAS…ARSM, and GNNL…QSGY. Low complexity predominate over residues 384-395; sequence PQYAPQQPLPQQ. Composition is skewed to polar residues over residues 404 to 421, 455 to 470, 480 to 506, and 549 to 563; these read MPTS…QRGS, SGYN…TNPS, QLTP…NTAP, and SNSG…SMGS. The interval 565–590 is nuclear localization domain; that stretch reads KRMRDDDDDRIVPPDSRGEFDTKRRK. A compositionally biased stretch (basic and acidic residues) spans 566 to 586; that stretch reads RMRDDDDDRIVPPDSRGEFDT.

Belongs to the EFG1/PHD1/stuA family.

It is found in the nucleus. Functionally, transcription factor that regulates asexual reproduction. Binds the StuA-response elements (StRE) with the consensus sequence 5'-(A/T)CGCG(T/A)N(A/C)-3' at the promoters of target genes. Required from the very earliest events of asexual reproduction until completion of conidiophore development, but is not specifically required for differentiation of conidia. Represses transcription of the abaA developmental regulatory gene and of the developmentally regulated awh11 gene. Controls the expression of the catalase-peroxidase gene cpeA. Plays an important role in cell wall biogenesis during the development by controlling the transcription level of fksA. This chain is Cell pattern formation-associated protein stuA, found in Emericella nidulans (strain FGSC A4 / ATCC 38163 / CBS 112.46 / NRRL 194 / M139) (Aspergillus nidulans).